We begin with the raw amino-acid sequence, 187 residues long: 1,6-anhydro-N-acetylmuramyl-L-alanine amidase AmpD (187 aa).

The region spanning 29–167 (SLLVVHNISL…APDRKTDPGP (139 aa)) is the N-acetylmuramoyl-L-alanine amidase domain. Position 34 (His34) interacts with Zn(2+). Residue Glu116 is the Proton acceptor of the active site. Positions 154 and 164 each coordinate Zn(2+).

The protein belongs to the N-acetylmuramoyl-L-alanine amidase 2 family. Zn(2+) serves as cofactor.

It is found in the cytoplasm. It catalyses the reaction Hydrolyzes the link between N-acetylmuramoyl residues and L-amino acid residues in certain cell-wall glycopeptides.. Its function is as follows. Involved in cell wall peptidoglycan recycling. Specifically cleaves the amide bond between the lactyl group of N-acetylmuramic acid and the alpha-amino group of the L-alanine in degradation products containing an anhydro N-acetylmuramyl moiety. This chain is 1,6-anhydro-N-acetylmuramyl-L-alanine amidase AmpD (ampD), found in Salmonella typhimurium (strain SL1344).